We begin with the raw amino-acid sequence, 682 residues long: Probable methyltransferase PMT12 (682 aa).

Residues 1–11 (MKLFLNSNLLR) lie on the Cytoplasmic side of the membrane. The chain crosses the membrane as a helical; Signal-anchor for type II membrane protein span at residues 12 to 32 (NSIFFKISAFVLISVACFFLG). The Lumenal segment spans residues 33–682 (KHWSEDGFRR…KRRKTKGKRA (650 aa)). Residues asparagine 67, asparagine 103, asparagine 125, asparagine 155, asparagine 173, asparagine 193, asparagine 273, asparagine 350, asparagine 395, asparagine 419, asparagine 600, and asparagine 625 are each glycosylated (N-linked (GlcNAc...) asparagine).

Belongs to the methyltransferase superfamily.

It is found in the golgi apparatus membrane. This Arabidopsis thaliana (Mouse-ear cress) protein is Probable methyltransferase PMT12.